The sequence spans 394 residues: GDP-mannose transporter (394 aa).

Residues 1–56 are Cytoplasmic-facing; that stretch reads MSNKKNEDIEMRAVEGANDFGGEKDPFLGRNSPVLRPRGREPTASAYFGKLDNSPG. The chain crosses the membrane as a helical span at residues 57–77; that stretch reads ASIIAYCLSSISMTVVNKYVV. Residues 78-81 are Lumenal-facing; it reads SGES. The chain crosses the membrane as a helical span at residues 82 to 102; that stretch reads WNLNFFYLGVQSLVCTIAILL. Residues 103-122 are Cytoplasmic-facing; sequence SRQTGLIKNLAPFDSNKAKR. A helical transmembrane segment spans residues 123 to 145; sequence WFPVSLLLVSMIYTGANALQYLS. Residues 146 to 150 lie on the Lumenal side of the membrane; sequence VPVYT. The helical transmembrane segment at 151–168 threads the bilayer; that stretch reads IFKNLTIIVIAYGEVLWF. Topologically, residues 169 to 174 are cytoplasmic; the sequence is GGSVTP. A helical transmembrane segment spans residues 175–199; the sequence is LMLLSFGLMVLSSVVAAWADIQAAI. Residues 200–207 lie on the Lumenal side of the membrane; it reads DGVGHSAE. A helical membrane pass occupies residues 208–228; sequence TSAALATLNAGYAWMGLNVVC. Residues 229–249 lie on the Cytoplasmic side of the membrane; sequence TSSYLLGMRKVIKKMNFKDYD. A helical transmembrane segment spans residues 250 to 270; that stretch reads SMFYNNLLTIPVLVVCSLLVE. Topologically, residues 271–288 are lumenal; that stretch reads DWSSENLAKNFPIETRNK. A helical membrane pass occupies residues 289 to 309; that stretch reads LMVGMIYSGLAAIFISYCSAW. At 310–317 the chain is on the cytoplasmic side; that stretch reads CIRVTSST. Residues 318 to 338 traverse the membrane as a helical segment; sequence TYSMVGALNKLPIAISGLIFF. Over 339 to 341 the chain is Lumenal; the sequence is DAP. Residues 342-362 traverse the membrane as a helical segment; sequence ITFGSITAIAVGFVSGLVFAW. At 363–394 the chain is on the cytoplasmic side; sequence AKVRQKAQEAGLLPTTKPTMSASAQSNRDANS.

Belongs to the TPT transporter family. SLC35D subfamily. In terms of assembly, homooligomer.

The protein localises to the golgi apparatus membrane. The protein resides in the cytoplasmic vesicle membrane. It is found in the endoplasmic reticulum membrane. In terms of biological role, involved in the import of GDP-mannose from the cytoplasm into the Golgi lumen. The polypeptide is GDP-mannose transporter (VRG4) (Chaetomium globosum (strain ATCC 6205 / CBS 148.51 / DSM 1962 / NBRC 6347 / NRRL 1970) (Soil fungus)).